Here is a 1392-residue protein sequence, read N- to C-terminus: DNA-directed RNA polymerase subunit beta (1392 aa).

Residues 1372–1392 (LSSYAEEDPDEGPEALPEAAE) are disordered.

This sequence belongs to the RNA polymerase beta chain family. As to quaternary structure, the RNAP catalytic core consists of 2 alpha, 1 beta, 1 beta' and 1 omega subunit. When a sigma factor is associated with the core the holoenzyme is formed, which can initiate transcription.

The catalysed reaction is RNA(n) + a ribonucleoside 5'-triphosphate = RNA(n+1) + diphosphate. In terms of biological role, DNA-dependent RNA polymerase catalyzes the transcription of DNA into RNA using the four ribonucleoside triphosphates as substrates. In Sphingopyxis alaskensis (strain DSM 13593 / LMG 18877 / RB2256) (Sphingomonas alaskensis), this protein is DNA-directed RNA polymerase subunit beta.